Consider the following 360-residue polypeptide: Phenylalanine--tRNA ligase alpha subunit (360 aa).

Glutamate 260 serves as a coordination point for Mg(2+).

The protein belongs to the class-II aminoacyl-tRNA synthetase family. Phe-tRNA synthetase alpha subunit type 1 subfamily. Tetramer of two alpha and two beta subunits. Mg(2+) serves as cofactor.

The protein localises to the cytoplasm. The catalysed reaction is tRNA(Phe) + L-phenylalanine + ATP = L-phenylalanyl-tRNA(Phe) + AMP + diphosphate + H(+). This chain is Phenylalanine--tRNA ligase alpha subunit, found in Beijerinckia indica subsp. indica (strain ATCC 9039 / DSM 1715 / NCIMB 8712).